The sequence spans 183 residues: Putative manganese efflux pump MntP (183 aa).

Helical transmembrane passes span 6–26 (LFLIAIALSLDAFGVALCIGL), 40–60 (IYFGFFQFLFAIIGGYAGFLF), 64–84 (IATMPQIVGGVVICIVGIIMI), 101–121 (MNIILGISVSIDAMVVGFTAL), 135–155 (LFIGIVTLFVSILAFITSKYL), and 158–178 (IDVIGKYADYIGGIILIFFGL).

The protein belongs to the MntP (TC 9.B.29) family.

It is found in the cell membrane. In terms of biological role, probably functions as a manganese efflux pump. The protein is Putative manganese efflux pump MntP of Clostridium tetani (strain Massachusetts / E88).